The following is a 476-amino-acid chain: ENTH domain-containing protein C794.11c (476 aa).

Positions tyrosine 30 to isoleucine 154 constitute an ENTH domain. 4 disordered regions span residues glutamate 157 to arginine 198, asparagine 213 to aspartate 308, glutamine 410 to asparagine 429, and valine 444 to aspartate 472. Serine 173 bears the Phosphoserine mark. 2 stretches are compositionally biased toward low complexity: residues arginine 178–arginine 198 and asparagine 213–serine 222. Serine 228 carries the post-translational modification Phosphoserine. Over residues aspartate 229–aspartate 240 the composition is skewed to acidic residues. Tyrosine 235 is subject to Phosphotyrosine. Serine 243 and serine 244 each carry phosphoserine. Basic and acidic residues predominate over residues glutamine 262–lysine 271. Basic and acidic residues predominate over residues valine 444–valine 454. Serine 459 is subject to Phosphoserine.

The protein is ENTH domain-containing protein C794.11c of Schizosaccharomyces pombe (strain 972 / ATCC 24843) (Fission yeast).